The primary structure comprises 431 residues: Xaa-Arg dipeptidase (431 aa).

It belongs to the peptidase M20A family.

The catalysed reaction is beta-alanyl-L-lysine + H2O = beta-alanine + L-lysine. It carries out the reaction beta-alanyl-L-arginine + H2O = beta-alanine + L-arginine. The enzyme catalyses beta-alanyl-L-ornithine + H2O = beta-alanine + L-ornithine. It catalyses the reaction N(2)-(4-aminobutanoyl)-L-lysine + H2O = 4-aminobutanoate + L-lysine. The catalysed reaction is N(2)-(4-aminobutanoyl)-L-arginine + H2O = 4-aminobutanoate + L-arginine. It carries out the reaction N(2)-(4-aminobutanoyl)-L-ornithine + H2O = 4-aminobutanoate + L-ornithine. In terms of biological role, catalyzes the peptide bond hydrolysis in dipeptides having basic amino acids lysine, ornithine or arginine at C-terminus. Postulated to function in a metabolite repair mechanism by eliminating alternate dipeptide by-products formed during carnosine synthesis. The protein is Xaa-Arg dipeptidase of Mus musculus (Mouse).